A 94-amino-acid polypeptide reads, in one-letter code: Pyrimidine/purine nucleoside phosphorylase (94 aa).

The protein belongs to the nucleoside phosphorylase PpnP family.

It catalyses the reaction a purine D-ribonucleoside + phosphate = a purine nucleobase + alpha-D-ribose 1-phosphate. It carries out the reaction adenosine + phosphate = alpha-D-ribose 1-phosphate + adenine. The enzyme catalyses cytidine + phosphate = cytosine + alpha-D-ribose 1-phosphate. The catalysed reaction is guanosine + phosphate = alpha-D-ribose 1-phosphate + guanine. It catalyses the reaction inosine + phosphate = alpha-D-ribose 1-phosphate + hypoxanthine. It carries out the reaction thymidine + phosphate = 2-deoxy-alpha-D-ribose 1-phosphate + thymine. The enzyme catalyses uridine + phosphate = alpha-D-ribose 1-phosphate + uracil. The catalysed reaction is xanthosine + phosphate = alpha-D-ribose 1-phosphate + xanthine. Catalyzes the phosphorolysis of diverse nucleosides, yielding D-ribose 1-phosphate and the respective free bases. Can use uridine, adenosine, guanosine, cytidine, thymidine, inosine and xanthosine as substrates. Also catalyzes the reverse reactions. The polypeptide is Pyrimidine/purine nucleoside phosphorylase (Salmonella typhimurium (strain LT2 / SGSC1412 / ATCC 700720)).